Reading from the N-terminus, the 304-residue chain is MGIYENNIIDGKAAAADLLGRLKVVMEGLKEEHGLFPSLVVIIVGDDPASRLYVGNKQRKAEELGINSKTIALPYETTQEELLGIIQELNEDENVHGILVQLPLPKHIDKILIINAIDPEKDVDGFHNANAGKLLTGEMDCMVPCTPQGCIYLIKKVMPVLSSKRAVVIGRSNIVGKPVALLLMYENCTVSILHSATANIEEHCRDAEIIIAAVGKARMVKSEWVSPGAVVIDVGINLITSESKNRFVGDVDFESVRDKVAAITPVPGGVGPMTIAFLLVNTVLGACRQKGIKQYKNIKSSVLQ.

NADP(+)-binding positions include 170–172 (GRS), Ser195, and Ile236.

It belongs to the tetrahydrofolate dehydrogenase/cyclohydrolase family. In terms of assembly, homodimer.

The enzyme catalyses (6R)-5,10-methylene-5,6,7,8-tetrahydrofolate + NADP(+) = (6R)-5,10-methenyltetrahydrofolate + NADPH. The catalysed reaction is (6R)-5,10-methenyltetrahydrofolate + H2O = (6R)-10-formyltetrahydrofolate + H(+). The protein operates within one-carbon metabolism; tetrahydrofolate interconversion. Catalyzes the oxidation of 5,10-methylenetetrahydrofolate to 5,10-methenyltetrahydrofolate and then the hydrolysis of 5,10-methenyltetrahydrofolate to 10-formyltetrahydrofolate. This is Bifunctional protein FolD from Anaplasma phagocytophilum (strain HZ).